The primary structure comprises 192 residues: Peptidyl-tRNA hydrolase (192 aa).

Tyrosine 17 serves as a coordination point for tRNA. Histidine 22 acts as the Proton acceptor in catalysis. Residues phenylalanine 68, asparagine 70, and asparagine 116 each contribute to the tRNA site.

It belongs to the PTH family. As to quaternary structure, monomer.

It is found in the cytoplasm. The catalysed reaction is an N-acyl-L-alpha-aminoacyl-tRNA + H2O = an N-acyl-L-amino acid + a tRNA + H(+). Its function is as follows. Hydrolyzes ribosome-free peptidyl-tRNAs (with 1 or more amino acids incorporated), which drop off the ribosome during protein synthesis, or as a result of ribosome stalling. Functionally, catalyzes the release of premature peptidyl moieties from peptidyl-tRNA molecules trapped in stalled 50S ribosomal subunits, and thus maintains levels of free tRNAs and 50S ribosomes. The sequence is that of Peptidyl-tRNA hydrolase from Hydrogenovibrio crunogenus (strain DSM 25203 / XCL-2) (Thiomicrospira crunogena).